The primary structure comprises 1124 residues: PAN2-PAN3 deadenylation complex catalytic subunit PAN2 (1124 aa).

WD repeat units follow at residues 19 to 58 (IDNSKITSLQFDNQQNLLWCGDSKGTTRSFTPQSTSIPMP), 118 to 157 (PGFNNLSCMTFNSNTNNDLVIAGDSLFKVDLLKPNMTTSF), 158 to 195 (NHTGKVSMIDNTLNYLTLGKSNGEIEIFDPVSNQTVKS), and 309 to 348 (SSNTYLANLEVSGNGEFITFSDGFQNLHLWSFKNNNSKNF). The tract at residues 351-484 (FPSYLEQPDF…EYKLSNKFEV (134 aa)) is linker. The USP domain occupies 484 to 861 (VPNCYSNLKI…KPIIVMYQLA (378 aa)). The Exonuclease domain occupies 917–1091 (IAIDAEFVAL…EDANTALLLY (175 aa)). Residues Asp-920, Glu-922, Asp-1030, and Asp-1083 each coordinate a divalent metal cation.

It belongs to the peptidase C19 family. PAN2 subfamily. In terms of assembly, forms a heterotrimer with an asymmetric homodimer of the regulatory subunit PAN3 to form the poly(A)-nuclease (PAN) deadenylation complex. A divalent metal cation serves as cofactor.

The protein resides in the cytoplasm. The enzyme catalyses Exonucleolytic cleavage of poly(A) to 5'-AMP.. Its activity is regulated as follows. Positively regulated by the regulatory subunit PAN3. Catalytic subunit of the poly(A)-nuclease (PAN) deadenylation complex, one of two cytoplasmic mRNA deadenylases involved in mRNA turnover. PAN specifically shortens poly(A) tails of RNA and the activity is stimulated by poly(A)-binding protein PAB1. PAN deadenylation is followed by rapid degradation of the shortened mRNA tails by the CCR4-NOT complex. Deadenylated mRNAs are then degraded by two alternative mechanisms, namely exosome-mediated 3'-5' exonucleolytic degradation, or deadenylation-dependent mRNA decaping and subsequent 5'-3' exonucleolytic degradation by XRN1. May also be involved in post-transcriptional maturation of mRNA poly(A) tails. This chain is PAN2-PAN3 deadenylation complex catalytic subunit PAN2, found in Debaryomyces hansenii (strain ATCC 36239 / CBS 767 / BCRC 21394 / JCM 1990 / NBRC 0083 / IGC 2968) (Yeast).